We begin with the raw amino-acid sequence, 117 residues long: Ribosome-binding factor A (117 aa).

This sequence belongs to the RbfA family. As to quaternary structure, monomer. Binds 30S ribosomal subunits, but not 50S ribosomal subunits or 70S ribosomes.

The protein localises to the cytoplasm. One of several proteins that assist in the late maturation steps of the functional core of the 30S ribosomal subunit. Associates with free 30S ribosomal subunits (but not with 30S subunits that are part of 70S ribosomes or polysomes). Required for efficient processing of 16S rRNA. May interact with the 5'-terminal helix region of 16S rRNA. This chain is Ribosome-binding factor A, found in Lacticaseibacillus casei (strain BL23) (Lactobacillus casei).